The following is a 465-amino-acid chain: Cysteine--tRNA ligase (465 aa).

Cys27 provides a ligand contact to Zn(2+). The 'HIGH' region motif lies at 29–39 (PTVYDDAHLGH). Cys207, His237, and Glu241 together coordinate Zn(2+). The short motif at 269–273 (KMSKS) is the 'KMSKS' region element. Lys272 lines the ATP pocket.

Belongs to the class-I aminoacyl-tRNA synthetase family. As to quaternary structure, monomer. It depends on Zn(2+) as a cofactor.

The protein localises to the cytoplasm. The catalysed reaction is tRNA(Cys) + L-cysteine + ATP = L-cysteinyl-tRNA(Cys) + AMP + diphosphate. This is Cysteine--tRNA ligase from Nitratiruptor sp. (strain SB155-2).